The following is an 88-amino-acid chain: MRLILSLPVLVVVLSMVLEGPAPAQAAGEISSTFERIPDKLKEFGNTLEDKARAAIESIKKSDIPAKTRNWFSEAFNKVKEHLKTAFS.

Residues 1–26 (MRLILSLPVLVVVLSMVLEGPAPAQA) form the signal peptide.

This sequence belongs to the apolipoprotein C1 family.

Its subcellular location is the secreted. In terms of biological role, inhibitor of lipoprotein binding to the low density lipoprotein (LDL) receptor, LDL receptor-related protein, and very low density lipoprotein (VLDL) receptor. Associates with high density lipoproteins (HDL) and the triacylglycerol-rich lipoproteins in the plasma and makes up about 10% of the protein of the VLDL and 2% of that of HDL. Appears to interfere directly with fatty acid uptake and is also the major plasma inhibitor of cholesteryl ester transfer protein (CETP). Binds free fatty acids and reduces their intracellular esterification. Modulates the interaction of APOE with beta-migrating VLDL and inhibits binding of beta-VLDL to the LDL receptor-related protein. The protein is Apolipoprotein C-I (APOC1) of Lycaon pictus (African wild dog).